Consider the following 2403-residue polypeptide: Highly reducing polyketide synthase fogA (2403 aa).

The Ketosynthase family 3 (KS3) domain maps to 3–428; that stretch reads DDPPCIVGMA…GANAHVILES (426 aa). Residues Cys-176, His-311, and His-350 each act as for beta-ketoacyl synthase activity in the active site. Residues 538–858 form a malonyl-CoA:ACP transacylase (MAT) domain region; the sequence is VFTGQGAQYA…PYAPSLVRKE (321 aa). The active-site For malonyltransferase activity is the Ser-632. An N-terminal hotdog fold region spans residues 929–1068; that stretch reads HELLGTFALT…GSIRVVEPLT (140 aa). The segment at 929–1238 is dehydratase (DH) domain; the sequence is HELLGTFALT…DARMSLYTGK (310 aa). The PKS/mFAS DH domain maps to 929–1241; that stretch reads HELLGTFALT…MSLYTGKSSA (313 aa). The active-site Proton acceptor; for dehydratase activity is His-961. The C-terminal hotdog fold stretch occupies residues 1084-1241; the sequence is SFEASPTNRW…MSLYTGKSSA (158 aa). The Proton donor; for dehydratase activity role is filled by Asp-1152. An enoyl reductase (ER) domain region spans residues 1663–1981; sequence GATDSMFFQQ…QQDRIGKIVI (319 aa). Residues 2006–2185 form a ketoreductase (KR) domain region; that stretch reads VYLLIGCLGG…AVAVGLGMIS (180 aa). The tract at residues 2280–2300 is disordered; that stretch reads AQNSTSSSGSNSNTPTTAAPW. Over residues 2282–2296 the composition is skewed to low complexity; it reads NSTSSSGSNSNTPTT. Residues 2320 to 2398 form the Carrier domain; sequence SLNAAILRLI…GLAVVVEGKL (79 aa). Ser-2357 carries the O-(pantetheine 4'-phosphoryl)serine modification.

Pantetheine 4'-phosphate is required as a cofactor.

Its pathway is secondary metabolite biosynthesis. Functionally, highly reducing polyketide synthase; part of the gene cluster that mediates the biosynthesis of flavoglaucin and congeners (including aspergin, dihydroauroglaucin and auroglaucin), prenylated salicylaldehyde derivatives carrying a saturated or an unsaturated C-7 side chain. FogA releases the carboxylic acid (8E,10E,12E)-3,5,7-trihydroxytetradeca-8,10,12-trienoic acid as its product, as well as derivatives with one and two double bonds. FogA is indeed able to reduce the initial triketide, thus being at least partially responsible for the differently saturated heptyl side chains of flavoglaucin congeners. The oxidoreductases fogB, fogC and fogD modify the nascent polyketide in fogA-bound form and, together, fogA, fogB, fogC and fogD are necessary for the formation of the aromatic core and the cyclized PKS products are released as salicyl alcohols. In particular, fogB is responsible for oxidation of a hydroxyl group or reduction of remaining double bond(s) at the C-7 residue whereas fogD is probably involved in the reductive release of the modified PKS products. The cytochrome P450 monooxygenase fogE is then responsible for the hydroxylation at C-3 of the benzene ring. The fogE products are substrates of the prenyltransferase fogH and the prenylated benzyl alcohols are subsequently oxidized by the fogF to produce the final aryl aldehydes flavoglaucin and congeners. The short-chain dehydrogenase fogG does not seem to be involved in the biosynthesis of the prenylated salicylaldehyde derivatives. This is Highly reducing polyketide synthase fogA from Aspergillus ruber (strain CBS 135680).